Consider the following 338-residue polypeptide: Tetraacyldisaccharide 4'-kinase (338 aa).

51-58 (HLGGAGKT) is a binding site for ATP.

Belongs to the LpxK family.

The enzyme catalyses a lipid A disaccharide + ATP = a lipid IVA + ADP + H(+). It functions in the pathway glycolipid biosynthesis; lipid IV(A) biosynthesis; lipid IV(A) from (3R)-3-hydroxytetradecanoyl-[acyl-carrier-protein] and UDP-N-acetyl-alpha-D-glucosamine: step 6/6. Functionally, transfers the gamma-phosphate of ATP to the 4'-position of a tetraacyldisaccharide 1-phosphate intermediate (termed DS-1-P) to form tetraacyldisaccharide 1,4'-bis-phosphate (lipid IVA). The sequence is that of Tetraacyldisaccharide 4'-kinase from Rhodopseudomonas palustris (strain HaA2).